We begin with the raw amino-acid sequence, 1220 residues long: MGSKLKFAHLHQHTQFSLLDGAAKLQDLLKWVKETTPEDPALAMTDHGNLFGAVEFYKKATAMGVKPIIGYEAYVAAESRFDRKRGKGLDGGYFHLTLLAKDFTGYQNLVRLASRAYLEGFYEKPRIDREILREHAQGLIALSGCLGAEIPQFILQDRLDLAEARLNEDLSIFGDRFFIEIQNHGLPEQKKVNQVLKEFARKYGLGMVATNDGHYVRKEDARAHEVLLAIQSKTTLDDPERWRFPCDEFYVKTPEEMRAMLPEAEWGDEPFDNTVEIARMCDVDLPIGDKMVYRIPRFPLPEGRTEAQYLRELTFLGLLRRYPDRITEAFYREVLRLLGTMPPHGDERALAEALARVEEKAWEELRKRLPPLEGVREWTAEAILHRALYELSVIERMGFPGYFLIVQDYINWARGHGVSVGPGRGSAAGSLVAYAVGITNIDPLRFGLLFERFLNPERVSMPDIDTDFSDRERDRVIQYVRERYGEDKVAQIGTFGSLASKAALKDVARVYGIPHKKAEELAKLIPVQFGKPKPLQEAIQVVPELRAEMEKDERIRQVIEVAMRLEGLNRHASVHAAGVVIAAEPLTDLVPLMRDQEGRPVTQYDMGAVEALGLLKMDFLGLRTLTFLDEARRIVKESKGVELDYDRLPLDDPKTFELLSRGETKGVFQLESGGMTATVRGLKPRRLEDIIALVSLYRPGPMEHIPTYIRRHHGQEPVSYAEFPHAEKYLRPILDETYGIPVYQEQIMQIASQVAGYSLGEADLLRRAMGKKRVEEMQKHRERFVRGAKERGVPEEEANRLFDMLEAFANYGFNKSHAAAYSLLSYQTAYVKAHYPVEFMAALLSVERHDSDKVAEYIRDARALGIPVLPPDVNRSGFDFKVVGEEILFGLSAVKNVGEMAARAILEERERGGPFKSLGDFLKRLPEQVVNKRALESLVKAGALDAFGDRARLLASLEPLLRWAAETRERGRSGLVGLFAEVEEPPLVEASPLDEITMLRYEKEALGIYVSGHPVLRYPGLREVASCTIEELSEFVRELPGKPKVLLSGMVEEVVRKPTRSGGMMARFTLSDETGALEVVVFGRAYEGVSPKLKEDIPLLVLAEVEKGEELRVLAQAVWTLEEVLEAPKALEVEVDHALLDEKGVARLKSLLDEHPGSLPVYLRVLGPFGEALFALREVRVGEEALGLLEAEGYRAYLVPDREVFLQGNGGGPKEEVVPF.

The protein belongs to the DNA polymerase type-C family. DnaE subfamily. As to quaternary structure, DNA polymerase III contains a core (composed of alpha, epsilon and theta chains) that associates with a tau subunit. This core dimerizes to form the PolIII' complex. PolIII' associates with the gamma complex (composed of gamma, delta, delta', psi and chi chains) and with the beta chain to form the complete DNA polymerase III complex.

The protein localises to the cytoplasm. It carries out the reaction DNA(n) + a 2'-deoxyribonucleoside 5'-triphosphate = DNA(n+1) + diphosphate. Functionally, DNA polymerase III is a complex, multichain enzyme responsible for most of the replicative synthesis in bacteria. This DNA polymerase also exhibits 3' to 5' exonuclease activity. The alpha chain is the DNA polymerase. The sequence is that of DNA polymerase III subunit alpha (dnaE) from Thermus aquaticus.